Consider the following 903-residue polypeptide: Glutamate receptor ionotropic, NMDA 1 (903 aa).

Positions 1-20 are cleaved as a signal peptide; it reads MGTMRLFLLAVLFLFSFARA. The Extracellular portion of the chain corresponds to 21 to 557; that stretch reads GCDPKIVNIG…TLDSFMQPFQ (537 aa). N-linked (GlcNAc...) asparagine glycosylation is found at N61, N203, N276, N300, N350, N368, N440, N469, and N489. A disulfide bond links C79 and C308. Cystine bridges form between C420–C452 and C436–C453. 3 residues coordinate glycine: P514, T516, and R521. Residues 558–578 form a helical membrane-spanning segment; that stretch reads STLWLLVGLSVHVVAVMLYLL. Topologically, residues 579–600 are cytoplasmic; that stretch reads DRFSPFGRFKVNSEEEEEDALT. Residues 601–620 form a pore-forming region; it reads LSSAMWFSWGVLLNSGIGEG. An intramembrane region (discontinuously helical) is located at residues 601 to 622; the sequence is LSSAMWFSWGVLLNSGIGEGAP. The Cytoplasmic segment spans residues 623–628; that stretch reads RSFSAR. The helical transmembrane segment at 629 to 645 threads the bilayer; the sequence is ILGMVWAGFAMIIVASY. Topologically, residues 646–810 are extracellular; the sequence is TANLAAFLVL…NAPATLTFEN (165 aa). 2 residues coordinate glycine: S686 and D730. C742 and C796 are disulfide-bonded. N769 carries an N-linked (GlcNAc...) asparagine glycan. A helical transmembrane segment spans residues 811–831; that stretch reads MAGVFMLVAGGIVAGIFLIFI. The Cytoplasmic segment spans residues 832 to 903; sequence EIAYKRHKDA…SSKDTVNVVV (72 aa).

It belongs to the glutamate-gated ion channel (TC 1.A.10.1) family. NR1/GRIN1 subfamily. In terms of assembly, heterotetramer; the NMDAR subunits are modular and harbor tiered domains that function in concert to regulate opening and closing of the cation-selective ion channel pore. Forms heterotetrameric channels composed of two GluN1/zeta subunits (GRIN1), and two identical GluN2/epsilon subunits (GRIN2A, GRIN2B, GRIN2C or GRIN2D) or GluN3 subunits (GRIN3A or GRIN3B) (in vitro). Does not form functional channels by itself. Can also form heterotetrameric channels that contain at least two GluN1 subunits and at least two different GluN2 subunits (or a combination of one GluN2 and one GluN3 subunits) (in vitro). In vivo, the subunit composition may vary in function of the expression levels of the different subunits.

The protein resides in the cell membrane. It localises to the postsynaptic cell membrane. The protein localises to the postsynaptic density membrane. It is found in the synaptic cell membrane. The catalysed reaction is Ca(2+)(in) = Ca(2+)(out). It catalyses the reaction Na(+)(in) = Na(+)(out). It carries out the reaction K(+)(in) = K(+)(out). Its activity is regulated as follows. NMDA glutamate receptor activity is modulated by zinc ions. The NMDA glutamate receptor activity of the heterotetramer with grin2b is stimulated by micromolar levels of Zn(2+). The NMDA glutamate receptor activity of the heterotetramer with grin2a is inhibited by nanomolar levels of Zn(2+). In terms of biological role, component of N-methyl-D-aspartate (NMDA) receptors (NMDARs) that function as heterotetrameric, ligand-gated cation channels with high calcium permeability and voltage-dependent block by Mg(2+). NMDARs participate in synaptic plasticity. Channel activation requires binding of the neurotransmitter L-glutamate to the GluN2 subunit, glycine binding to the GluN1 subunit, plus membrane depolarization to eliminate channel inhibition by Mg(2+). NMDARs mediate simultaneously the potasium efflux and the influx of calcium and sodium. Each GluN2 or GluN3 subunit confers differential attributes to channel properties, including activation, deactivation and desensitization kinetics, pH sensitivity, Ca2(+) permeability, and binding to allosteric modulators. In Xenopus laevis (African clawed frog), this protein is Glutamate receptor ionotropic, NMDA 1.